The chain runs to 304 residues: Xylanase inhibitor protein 1 (304 aa).

The first 30 residues, 1–30 (MAPLAARRPACLLALLSVAAALFLTPTALA), serve as a signal peptide directing secretion. Residues 36–304 (GQVTVFWGRN…NYSSLIKYYA (269 aa)) enclose the GH18 domain. A disulfide bond links C55 and C96. N-linked (GlcNAc...) asparagine glycosylation occurs at N119. Catalysis depends on E158, which acts as the Proton donor. Residues 178–184 (IRGGPGK) are interaction with fungal GH11 xylanase. A disulfide bond links C194 and C225. Positions 262–275 (HPKNVYYGVAPVAQ) are interaction with fungal GH10 xylanase. N295 carries an N-linked (GlcNAc...) asparagine glycan.

Belongs to the glycosyl hydrolase 18 family. Xylanase inhibitor subfamily. Binds to fungal GH10 and GH11 xylanases. Also forms a ternary complex with barley alpha-amylase 1 (AMY1) and insoluble starch.

It localises to the secreted. Functionally, fungal xylanase inhibitor. Possesses competitive inhibiting activity against fungal endo-1,4-beta-D-xylanases belonging to glycoside hydrolase family 10 (GH10) and family 11 (GH11). Possesses also inhibitory activity towards barley alpha-amylases. Binding to xylanases or amylases is necessary for inhibition activity. May function in plant defense against secreted fungal pathogen xylanases. Is similar to class III chitinases, but does not exhibit chitinase activity. This chain is Xylanase inhibitor protein 1, found in Triticum aestivum (Wheat).